The primary structure comprises 114 residues: Hydrogenase maturation factor HypA (114 aa).

H2 lines the Ni(2+) pocket. The Zn(2+) site is built by C73, C76, C90, and C93.

The protein belongs to the HypA/HybF family.

In terms of biological role, involved in the maturation of [NiFe] hydrogenases. Required for nickel insertion into the metal center of the hydrogenase. This is Hydrogenase maturation factor HypA from Chloroflexus aurantiacus (strain ATCC 29366 / DSM 635 / J-10-fl).